The primary structure comprises 416 residues: Gap junction alpha-3 protein (416 aa).

The stretch at 2–15 (GDWSFLGRLLENAQ) is an intramembrane region. Over 16 to 19 (EHST) the chain is Cytoplasmic. Residues 20 to 40 (VIGKVWLTVLFIFRILVLGAA) traverse the membrane as a helical segment. Over 41–71 (AEEVWGDEQSDFTCNTQQPGCENVCYDRAFP) the chain is Extracellular. Cystine bridges form between Cys-54/Cys-198, Cys-61/Cys-192, and Cys-65/Cys-187. A helical membrane pass occupies residues 72 to 92 (ISHIRFWALQIIFVSTPTLIY). The Cytoplasmic portion of the chain corresponds to 93 to 158 (LGHVLHIVRM…GALLRTYVFN (66 aa)). A compositionally biased stretch (basic and acidic residues) spans 110–128 (EEELLRRDNPQHGRGREPM). A disordered region spans residues 110 to 141 (EEELLRRDNPQHGRGREPMRTGSPRDPPLRDD). The helical transmembrane segment at 159–179 (IIFKTLFEVGFIAGQYFLYGF) threads the bilayer. Residues 180–207 (QLQPLYRCDRWPCPNTVDCFISRPTEKT) are Extracellular-facing. A helical transmembrane segment spans residues 208–228 (IFVIFMLAVACASLVLNMLEI). The Cytoplasmic portion of the chain corresponds to 229–416 (YHLGWKKLKQ…GRARPGDLAI (188 aa)). A disordered region spans residues 336–416 (GAEPQTPASK…GRARPGDLAI (81 aa)). Over residues 342 to 353 (PASKPSSAASSP) the composition is skewed to low complexity.

It belongs to the connexin family. Alpha-type (group II) subfamily. A hemichannel or connexon is composed of a hexamer of connexins. A functional gap junction is formed by the apposition of two hemichannels. Forms heteromeric channels with GJA8. As to expression, detected in eye lens (at protein level). Most abundant in lens, but also present in heart and kidney.

It localises to the cell membrane. The protein resides in the cell junction. Its subcellular location is the gap junction. In terms of biological role, structural component of lens fiber gap junctions. Gap junctions are dodecameric channels that connect the cytoplasm of adjoining cells. They are formed by the docking of two hexameric hemichannels, one from each cell membrane. Small molecules and ions diffuse from one cell to a neighboring cell via the central pore. This chain is Gap junction alpha-3 protein (Gja3), found in Rattus norvegicus (Rat).